The chain runs to 95 residues: Acylphosphatase (95 aa).

An Acylphosphatase-like domain is found at Arg5–Pro93. Residues Arg20 and Asn38 contribute to the active site.

The protein belongs to the acylphosphatase family.

The catalysed reaction is an acyl phosphate + H2O = a carboxylate + phosphate + H(+). The protein is Acylphosphatase (acyP) of Pyrobaculum islandicum (strain DSM 4184 / JCM 9189 / GEO3).